A 327-amino-acid chain; its full sequence is Lipoyl synthase (327 aa).

Positions 72, 77, 83, 98, 102, 105, and 313 each coordinate [4Fe-4S] cluster. In terms of domain architecture, Radical SAM core spans 83-302 (CWSHGTATIM…RRVGLEKGFL (220 aa)).

It belongs to the radical SAM superfamily. Lipoyl synthase family. [4Fe-4S] cluster is required as a cofactor.

The protein localises to the cytoplasm. The enzyme catalyses [[Fe-S] cluster scaffold protein carrying a second [4Fe-4S](2+) cluster] + N(6)-octanoyl-L-lysyl-[protein] + 2 oxidized [2Fe-2S]-[ferredoxin] + 2 S-adenosyl-L-methionine + 4 H(+) = [[Fe-S] cluster scaffold protein] + N(6)-[(R)-dihydrolipoyl]-L-lysyl-[protein] + 4 Fe(3+) + 2 hydrogen sulfide + 2 5'-deoxyadenosine + 2 L-methionine + 2 reduced [2Fe-2S]-[ferredoxin]. Its pathway is protein modification; protein lipoylation via endogenous pathway; protein N(6)-(lipoyl)lysine from octanoyl-[acyl-carrier-protein]: step 2/2. In terms of biological role, catalyzes the radical-mediated insertion of two sulfur atoms into the C-6 and C-8 positions of the octanoyl moiety bound to the lipoyl domains of lipoate-dependent enzymes, thereby converting the octanoylated domains into lipoylated derivatives. This Francisella philomiragia subsp. philomiragia (strain ATCC 25017 / CCUG 19701 / FSC 153 / O#319-036) protein is Lipoyl synthase.